A 238-amino-acid chain; its full sequence is Sugar fermentation stimulation protein homolog (238 aa).

The protein belongs to the SfsA family.

This chain is Sugar fermentation stimulation protein homolog, found in Klebsiella pneumoniae (strain 342).